Here is a 541-residue protein sequence, read N- to C-terminus: 5' exonuclease Apollo (541 aa).

Lysine 334 is covalently cross-linked (Glycyl lysine isopeptide (Lys-Gly) (interchain with G-Cter in SUMO2)). Residues 455 to 475 form a disordered region; that stretch reads PLLSRGDSGSPARGNQSDCVG. The short motif at 492-507 is the TBM element; it reads ESRGLALKYLLTPVHF.

This sequence belongs to the DNA repair metallo-beta-lactamase (DRMBL) family. As to quaternary structure, interacts with MUS81, MRE11 and FANCD2. Interacts with HSPA2, HSPA8 and HSPA14. Interacts with SPAG5. Interacts with TERF2; the interaction is direct. Ubiquitinated, leading to its degradation. Interaction with TERF2 protects it from ubiquitination.

The protein localises to the chromosome. It localises to the telomere. The protein resides in the nucleus. It is found in the cytoplasm. Its subcellular location is the cytoskeleton. The protein localises to the microtubule organizing center. It localises to the centrosome. The enzyme catalyses a beta-lactam + H2O = a substituted beta-amino acid. Its function is as follows. 5'-3' exonuclease that plays a central role in telomere maintenance and protection during S-phase. Participates in the protection of telomeres against non-homologous end-joining (NHEJ)-mediated repair, thereby ensuring that telomeres do not fuse. Plays a key role in telomeric loop (T loop) formation by being recruited by TERF2 at the leading end telomeres and by processing leading-end telomeres immediately after their replication via its exonuclease activity: generates 3' single-stranded overhang at the leading end telomeres avoiding blunt leading-end telomeres that are vulnerable to end-joining reactions and expose the telomere end in a manner that activates the DNA repair pathways. Together with TERF2, required to protect telomeres from replicative damage during replication by controlling the amount of DNA topoisomerase (TOP1, TOP2A and TOP2B) needed for telomere replication during fork passage and prevent aberrant telomere topology. Also involved in response to DNA damage: plays a role in response to DNA interstrand cross-links (ICLs) by facilitating double-strand break formation. In case of spindle stress, involved in prophase checkpoint. Possesses beta-lactamase activity, catalyzing the hydrolysis of penicillin G and nitrocefin. Exhibits no activity towards other beta-lactam antibiotic classes including cephalosporins (cefotaxime) and carbapenems (imipenem). This Mus musculus (Mouse) protein is 5' exonuclease Apollo (Dclre1b).